The sequence spans 325 residues: DNA repair and recombination protein RadA (325 aa).

Residue 107 to 114 participates in ATP binding; that stretch reads GEFGSGKT.

It belongs to the eukaryotic RecA-like protein family.

Its function is as follows. Involved in DNA repair and in homologous recombination. Binds and assemble on single-stranded DNA to form a nucleoprotein filament. Hydrolyzes ATP in a ssDNA-dependent manner and promotes DNA strand exchange between homologous DNA molecules. In Methanosarcina acetivorans (strain ATCC 35395 / DSM 2834 / JCM 12185 / C2A), this protein is DNA repair and recombination protein RadA.